Here is a 590-residue protein sequence, read N- to C-terminus: Beta-fructofuranosidase, insoluble isoenzyme CWINV2 (590 aa).

The first 25 residues, 1–25, serve as a signal peptide directing secretion; the sequence is MSAPKFGYVLLLIVLINISNNGVDA. Substrate is bound by residues 59–62, Gln-78, and Trp-86; that span reads WIND. Asp-62 is an active-site residue. A glycan (N-linked (GlcNAc...) asparagine) is linked at Asn-118. 121-122 is a substrate binding site; that stretch reads WS. 2 N-linked (GlcNAc...) asparagine glycosylation sites follow: Asn-143 and Asn-180. Substrate contacts are provided by residues 185 to 186, Glu-241, and Asp-275; that span reads RD. N-linked (GlcNAc...) asparagine glycosylation is present at Asn-335. Cys-435 and Cys-483 are joined by a disulfide. Asn-564 carries an N-linked (GlcNAc...) asparagine glycan.

Belongs to the glycosyl hydrolase 32 family. Expressed in flowers, and seeds.

It is found in the secreted. It localises to the extracellular space. The protein resides in the apoplast. Its subcellular location is the cell wall. The enzyme catalyses Hydrolysis of terminal non-reducing beta-D-fructofuranoside residues in beta-D-fructofuranosides.. This chain is Beta-fructofuranosidase, insoluble isoenzyme CWINV2 (CWINV2), found in Arabidopsis thaliana (Mouse-ear cress).